A 187-amino-acid polypeptide reads, in one-letter code: Sodium/potassium ATPase inhibitor SPAI-2 (187 aa).

The N-terminal stretch at 1 to 21 is a signal peptide; the sequence is MRSRSFLVLVAVFLICETLVA. The residue at position 22 (Gln22) is a Pyrrolidone carboxylic acid. The propeptide occupies 22 to 126; that stretch reads QRLDRIRGPK…NAQLPDKVQD (105 aa). Residues 28 to 98 form a disordered region; it reads RGPKGQGQDP…QDPVKAELPD (71 aa). A run of 14 repeats spans residues 34–39, 40–45, 46–51, 58–63, 64–69, 70–75, 76–81, 82–87, 88–93, 100–105, 106–111, 112–117, 118–123, and 124–129. Residues 34-129 form a 14 X 6 AA approximate tandem repeats region; sequence GQDPVEGQDQ…LPDKVQDPVK (96 aa). The stretch at 64-85 is one SVP-1 clotting 1 repeat; the sequence is GQDPVKGQDPVKGQDPVKGQDL. Positions 139–187 constitute a WAP domain; it reads LLSKRGHCPRILFRCPLSNPSNKCWRDYDCPGVKKCCEGFCGKDCLYPK. 4 disulfides stabilise this stretch: Cys146–Cys175, Cys153–Cys179, Cys162–Cys174, and Cys168–Cys183.

In terms of processing, the short form (AA 127-187) may be an artifact due to the strongly acidic conditions of the duodenum. The pro-SPAI form may be the native form. In terms of tissue distribution, small intestine &gt; large intestine. The plasma contains the pro-SPAI form circulating.

Its function is as follows. Inhibits Na(+),K(+) ATPase by the competitive mode against Na(+). The protein is Sodium/potassium ATPase inhibitor SPAI-2 of Sus scrofa (Pig).